The primary structure comprises 336 residues: UDP-N-acetylmuramoylpentapeptide-lysine N(6)-alanyltransferase (336 aa).

Substrate is bound by residues 37 to 40, Y104, R212, Y216, and Y257; that span reads KNNW.

Belongs to the FemABX family.

The catalysed reaction is UDP-N-acetyl-alpha-D-muramoyl-L-alanyl-gamma-D-glutamyl-L-lysyl-D-alanyl-D-alanine + L-alanyl-tRNA(Ala) = UDP-N-acetyl-alpha-D-muramoyl-L-alanyl-gamma-D-glutamyl-N(6)-(L-alanyl)-L-lysyl-D-alanyl-D-alanine + tRNA(Ala) + H(+). In terms of biological role, involved in the synthesis of the bacterial cell wall. Catalyzes the addition of alanine into the interchain peptide bridge of peptidoglycan precursor using aminoacyl-tRNA(Ala) as amino acid donor. This alanine is added to the epsilon-amino group of the L-lysine of the peptidoglycan UDP-N-acetyl-alpha-D-muramoyl-L-alanyl-D-glutamyl-L-lysyl-D-alanyl-D-alanine, in a ribosome-independent mechanism. Specific for UDP-N-acetyl-muramoyl-pentapeptide. Has no activity toward UDP-N-acetyl-muramoyl-tetrapeptide or UDP-N-acetyl-muramoyl-tripeptide. Also acts on L-seryl-tRNA(Ser). In Weissella viridescens (Lactobacillus viridescens), this protein is UDP-N-acetylmuramoylpentapeptide-lysine N(6)-alanyltransferase.